Consider the following 332-residue polypeptide: UDP-N-acetylenolpyruvoylglucosamine reductase (332 aa).

In terms of domain architecture, FAD-binding PCMH-type spans 15–184 (IDVSAACFLE…TYVSFRLSKR (170 aa)). The active site involves arginine 160. The active-site Proton donor is serine 232. The active site involves glutamate 328.

The protein belongs to the MurB family. FAD is required as a cofactor.

It is found in the cytoplasm. The catalysed reaction is UDP-N-acetyl-alpha-D-muramate + NADP(+) = UDP-N-acetyl-3-O-(1-carboxyvinyl)-alpha-D-glucosamine + NADPH + H(+). It functions in the pathway cell wall biogenesis; peptidoglycan biosynthesis. Cell wall formation. The polypeptide is UDP-N-acetylenolpyruvoylglucosamine reductase (Bacteroides fragilis (strain ATCC 25285 / DSM 2151 / CCUG 4856 / JCM 11019 / LMG 10263 / NCTC 9343 / Onslow / VPI 2553 / EN-2)).